The chain runs to 486 residues: N-succinylglutamate 5-semialdehyde dehydrogenase (486 aa).

Residue 220-225 coordinates NAD(+); the sequence is GSSRTG. Catalysis depends on residues E243 and C277.

The protein belongs to the aldehyde dehydrogenase family. AstD subfamily.

It catalyses the reaction N-succinyl-L-glutamate 5-semialdehyde + NAD(+) + H2O = N-succinyl-L-glutamate + NADH + 2 H(+). The protein operates within amino-acid degradation; L-arginine degradation via AST pathway; L-glutamate and succinate from L-arginine: step 4/5. In terms of biological role, catalyzes the NAD-dependent reduction of succinylglutamate semialdehyde into succinylglutamate. This chain is N-succinylglutamate 5-semialdehyde dehydrogenase, found in Shewanella halifaxensis (strain HAW-EB4).